A 285-amino-acid chain; its full sequence is Polyamine aminopropyltransferase (285 aa).

Positions 2-237 constitute a PABS domain; sequence EFWFSELHSP…GYWLFGFASK (236 aa). Position 31 (Gln31) interacts with S-methyl-5'-thioadenosine. A spermidine-binding site is contributed by Asp86. Residues Glu106 and 137-138 each bind S-methyl-5'-thioadenosine; that span reads DA. Catalysis depends on Asp155, which acts as the Proton acceptor.

This sequence belongs to the spermidine/spermine synthase family. Homodimer or homotetramer.

The protein resides in the cytoplasm. The enzyme catalyses S-adenosyl 3-(methylsulfanyl)propylamine + putrescine = S-methyl-5'-thioadenosine + spermidine + H(+). Its pathway is amine and polyamine biosynthesis; spermidine biosynthesis; spermidine from putrescine: step 1/1. Functionally, catalyzes the irreversible transfer of a propylamine group from the amino donor S-adenosylmethioninamine (decarboxy-AdoMet) to putrescine (1,4-diaminobutane) to yield spermidine. This is Polyamine aminopropyltransferase from Lachnospira eligens (strain ATCC 27750 / DSM 3376 / VPI C15-48 / C15-B4) (Eubacterium eligens).